The sequence spans 155 residues: Ribonuclease H (155 aa).

The RNase H type-1 domain occupies 4–145; sequence QQKVVEIYTD…ADALARKAIA (142 aa). 4 residues coordinate Mg(2+): Asp13, Glu51, Asp73, and Asp137.

The protein belongs to the RNase H family. As to quaternary structure, monomer. Mg(2+) serves as cofactor.

Its subcellular location is the cytoplasm. The catalysed reaction is Endonucleolytic cleavage to 5'-phosphomonoester.. In terms of biological role, endonuclease that specifically degrades the RNA of RNA-DNA hybrids. The sequence is that of Ribonuclease H from Bartonella tribocorum (strain CIP 105476 / IBS 506).